The primary structure comprises 183 residues: Ribose 1,5-bisphosphate phosphokinase PhnN (183 aa).

The protein belongs to the ribose 1,5-bisphosphokinase family.

It catalyses the reaction alpha-D-ribose 1,5-bisphosphate + ATP = 5-phospho-alpha-D-ribose 1-diphosphate + ADP. It functions in the pathway metabolic intermediate biosynthesis; 5-phospho-alpha-D-ribose 1-diphosphate biosynthesis; 5-phospho-alpha-D-ribose 1-diphosphate from D-ribose 5-phosphate (route II): step 3/3. Its function is as follows. Catalyzes the phosphorylation of ribose 1,5-bisphosphate to 5-phospho-D-ribosyl alpha-1-diphosphate (PRPP). This is Ribose 1,5-bisphosphate phosphokinase PhnN from Azotobacter vinelandii (strain DJ / ATCC BAA-1303).